The following is a 499-amino-acid chain: Serine/threonine-protein kinase RHS3 (499 aa).

Positions 1–92 (MLLKPGNKLV…NSSKPHTGGD (92 aa)) are disordered. Residues 39–55 (QKQVEQNTKKIEEHQIK) are compositionally biased toward basic and acidic residues. The span at 63–85 (SNHNVNMSSQSNNSESTSTNNSS) shows a compositional bias: low complexity. Positions 113 to 436 (FRVLKRLGYG…ATEIKQHPFF (324 aa)) constitute a Protein kinase domain. ATP is bound by residues 119–127 (LGYGDIGSV) and Lys144. The active-site Proton acceptor is Asp240. The AGC-kinase C-terminal domain maps to 437-499 (EGVNWALIRG…DPDYIVFEYF (63 aa)).

This sequence belongs to the protein kinase superfamily. AGC Ser/Thr protein kinase family. As to quaternary structure, interacts with PDPK1/PDK1. Post-translationally, autophosphorylated and phosphorylated by PDPK1/PDK1. As to expression, specifically expressed in root hair cells.

The catalysed reaction is L-seryl-[protein] + ATP = O-phospho-L-seryl-[protein] + ADP + H(+). It catalyses the reaction L-threonyl-[protein] + ATP = O-phospho-L-threonyl-[protein] + ADP + H(+). Its activity is regulated as follows. Activated by PDPK1/PDK1. In terms of biological role, involved in root hair growth and morphogenesis. The chain is Serine/threonine-protein kinase RHS3 from Arabidopsis thaliana (Mouse-ear cress).